A 267-amino-acid chain; its full sequence is Thiamine pyrophosphokinase 2 (267 aa).

It belongs to the thiamine pyrophosphokinase family.

It localises to the cytoplasm. The protein resides in the cytosol. The catalysed reaction is thiamine + ATP = thiamine diphosphate + AMP + H(+). The protein operates within cofactor biosynthesis; thiamine diphosphate biosynthesis; thiamine diphosphate from thiamine: step 1/1. Catalyzes the phosphorylation of thiamine to thiamine pyrophosphate (TPP). TPP is an active cofactor for enzymes involved in glycolysis and energy production. Plant leaves require high levels of TPP for photosynthesis and carbohydrate metabolism. The sequence is that of Thiamine pyrophosphokinase 2 (TPK2) from Oryza sativa subsp. japonica (Rice).